The primary structure comprises 928 residues: MAYNRLGSPQRDGPYSPSAQPQYDSRSPSPGRPLQPYIHPDEAYARQQPLHLQMPTASDDRLAMQPTYSVENVHNPQAYGQQYGQHLPDSGDMGYGRNDYIVSPEEHHDAYYTQPYSPHPQGDYALDPYPSHDEPYRPDTDNVPILQPDSAYGPDPHTQPGMDYDDYQEEPRPTPSPAPIRRWKTVKEVQLFNGNLVLDCPVPPKLLANVPHAKPPERDEFTHMRYSAATCDPSDFHNERFTLRQRLFAKPRQTELFIVVTMYNEDEFLFARTMIGVFKNIEFMCNRSSSKTWGKEAWKKIVVCIVSDGRAKINPRTRAVLAGLGVYQDGIAKQQVNGKDVTAHIYEYTTQVGLELKGTQVSLKPRSATPVQLLFCLKEKNQKKINSHRWFFQAFGRVLDPNICVLIDAGTKPGKDSIYQLWKAFDLEPMCGGACGEIKVMLDHGKKLLNPLVATQNFEYKMSNILDKPLESAFGFISVLPGAFCAYRYVALQNDKNGVGPLEKYFKGETMHADAGVFTANMYLAEDRILCFELVSKRNCRWILQYVKSATGETDVPDRIPEFVLQRRRWLNGSFFAAVYAVAHVYQLWRTDHSFLRKLMFLIEFTYQTINMLFAWFAIGNFFLVFRLLTASLGTKETLGTAGTVLGVVFEFVYLGTLLYCFILSMGNRPQGNPKSYMMMVIFWSVLMVWLTFASIFLTVKSIETEVQQKDFSFSTIFNNSTFFGLIVSLASTYVLWFVASFLFFDPWHMFTCFLQYIVLTPTYINVLNIYAFCNTHDITWGTKGDDKAEKLPSANVKPGGKVDVLIPQDDGDLNAQYDSELKKFATKPPKEVKAPNPADKQEDYYKSFRSNVVTAWMITNFILVAAVLNIAGFDRINVHDTQQQNSTIYLAVILWSVAGLSLFRFTGACWFLVVRMVSLEIWSVCKV.

2 disordered regions span residues 1–45 and 110–179; these read MAYN…EAYA and AYYT…SPAP. Residues 17–28 show a composition bias toward polar residues; sequence PSAQPQYDSRSP. Positions 130-140 are enriched in basic and acidic residues; it reads PSHDEPYRPDT. 9 helical membrane-spanning segments follow: residues 472–492, 570–589, 613–633, 644–664, 678–698, 723–743, 753–773, 854–874, and 893–913; these read SAFG…YVAL, WLNG…YQLW, LFAW…TASL, TVLG…CFIL, MMMV…SIFL, FFGL…ASFL, CFLQ…IYAF, VTAW…IAGF, and VILW…CWFL.

Belongs to the chitin synthase family. Class I subfamily.

The protein localises to the cell membrane. The enzyme catalyses [(1-&gt;4)-N-acetyl-beta-D-glucosaminyl](n) + UDP-N-acetyl-alpha-D-glucosamine = [(1-&gt;4)-N-acetyl-beta-D-glucosaminyl](n+1) + UDP + H(+). In terms of biological role, polymerizes chitin, a structural polymer of the cell wall and septum, by transferring the sugar moiety of UDP-GlcNAc to the non-reducing end of the growing chitin polymer. CHS2 plays a synergistic role to CHS1 in normal yeast cell reproductive growth, even if this role is less predominant than for CHS1. With CHS3, plays an important role in virulence. In Exophiala dermatitidis (Black yeast-like fungus), this protein is Chitin synthase 2.